The following is a 136-amino-acid chain: Ribonuclease VapC1 (136 aa).

Residues 18-129 (ILVDTSVLID…KKHFERLKEF (112 aa)) form the PINc domain. 2 residues coordinate Mg(2+): Asp21 and Asp101.

It belongs to the PINc/VapC protein family. The cofactor is Mg(2+).

Toxic component of a type II toxin-antitoxin (TA) system. An RNase. Its cognate antitoxin is VapB1. The polypeptide is Ribonuclease VapC1 (Methanocaldococcus jannaschii (strain ATCC 43067 / DSM 2661 / JAL-1 / JCM 10045 / NBRC 100440) (Methanococcus jannaschii)).